The sequence spans 333 residues: Leucine carboxyl methyltransferase 1 (333 aa).

Residues lysine 42, arginine 82, glycine 107, aspartate 131, 181–182 (DL), and glutamate 208 contribute to the S-adenosyl-L-methionine site.

Belongs to the methyltransferase superfamily. LCMT family.

It catalyses the reaction [phosphatase 2A protein]-C-terminal L-leucine + S-adenosyl-L-methionine = [phosphatase 2A protein]-C-terminal L-leucine methyl ester + S-adenosyl-L-homocysteine. Methylates the carboxyl group of the C-terminal leucine residue of protein phosphatase 2A catalytic subunits to form alpha-leucine ester residues. In Caenorhabditis elegans, this protein is Leucine carboxyl methyltransferase 1.